We begin with the raw amino-acid sequence, 439 residues long: MREIIHLQTGQCGNQVGCKFWETISGEHGIDQTGRYVGTSDNQLERINVYYNEASSKKYVPRAVLIDLEPGTMDAVRQGPFGELFRPDNFVFGQSGAGNNWAKGHYTEGAELIDSVMDVVRKEAESSDCLQGFQITHSLGGGTGAGMGTLLLSKIREDFPDRMICTFSVVPSPKVSDTVVEPYNATLSIHQLVENADETFCIDNEALYDICFRTLKLNNPGYGDLNHLVSLVMSGVTTCLRFPGQLNADLRKLAVNMIPFPRLHFFVAGFAPLIAIGTQKFKTYSVSELTQQMFDSKNMMTACDPRKGRYLTVAAMFRGKISMKDVDEQMSMVQSKNSSLFVEWIPSNVKTAVCDIAPTGLEMSATFVGNTTSIQELFKRISDQFTVMFRRKAFLHWYTGEGMDEMEFSEAESNMNDLLSEYQQYQDATIEDAEEFLVN.

The GTP site is built by glutamine 11, glutamate 69, serine 138, glycine 142, threonine 143, glycine 144, asparagine 204, and asparagine 226. Glutamate 69 is a binding site for Mg(2+).

The protein belongs to the tubulin family. As to quaternary structure, dimer of alpha and beta chains. A typical microtubule is a hollow water-filled tube with an outer diameter of 25 nm and an inner diameter of 15 nM. Alpha-beta heterodimers associate head-to-tail to form protofilaments running lengthwise along the microtubule wall with the beta-tubulin subunit facing the microtubule plus end conferring a structural polarity. Microtubules usually have 13 protofilaments but different protofilament numbers can be found in some organisms and specialized cells. Mg(2+) is required as a cofactor.

The protein localises to the cytoplasm. It is found in the cytoskeleton. Its function is as follows. Tubulin is the major constituent of microtubules, a cylinder consisting of laterally associated linear protofilaments composed of alpha- and beta-tubulin heterodimers. Microtubules grow by the addition of GTP-tubulin dimers to the microtubule end, where a stabilizing cap forms. Below the cap, tubulin dimers are in GDP-bound state, owing to GTPase activity of alpha-tubulin. This chain is Tubulin beta chain (TUB2), found in Encephalitozoon cuniculi (strain GB-M1) (Microsporidian parasite).